A 90-amino-acid polypeptide reads, in one-letter code: Probable Fe(2+)-trafficking protein (90 aa).

The protein belongs to the Fe(2+)-trafficking protein family.

Its function is as follows. Could be a mediator in iron transactions between iron acquisition and iron-requiring processes, such as synthesis and/or repair of Fe-S clusters in biosynthetic enzymes. The chain is Probable Fe(2+)-trafficking protein from Azotobacter vinelandii (strain DJ / ATCC BAA-1303).